The primary structure comprises 405 residues: Polyketide biosynthesis cytochrome P450 PksS (405 aa).

A helical transmembrane segment spans residues 231 to 251; the sequence is LYSMLFLLVVAGLETTVNLLG. A heme-binding site is contributed by cysteine 352.

The protein belongs to the cytochrome P450 family.

Its subcellular location is the cell membrane. It functions in the pathway antibiotic biosynthesis; bacillaene biosynthesis. Involved in the metabolism of the antibiotic polyketide bacillaene which is involved in secondary metabolism. The substrate is dihydrobacillaene. The polypeptide is Polyketide biosynthesis cytochrome P450 PksS (pksS) (Bacillus subtilis (strain 168)).